The primary structure comprises 298 residues: ATP phosphoribosyltransferase (298 aa).

It belongs to the ATP phosphoribosyltransferase family. Long subfamily. The cofactor is Mg(2+).

It is found in the cytoplasm. It catalyses the reaction 1-(5-phospho-beta-D-ribosyl)-ATP + diphosphate = 5-phospho-alpha-D-ribose 1-diphosphate + ATP. It participates in amino-acid biosynthesis; L-histidine biosynthesis; L-histidine from 5-phospho-alpha-D-ribose 1-diphosphate: step 1/9. Feedback inhibited by histidine. Catalyzes the condensation of ATP and 5-phosphoribose 1-diphosphate to form N'-(5'-phosphoribosyl)-ATP (PR-ATP). Has a crucial role in the pathway because the rate of histidine biosynthesis seems to be controlled primarily by regulation of HisG enzymatic activity. The sequence is that of ATP phosphoribosyltransferase from Aeromonas hydrophila subsp. hydrophila (strain ATCC 7966 / DSM 30187 / BCRC 13018 / CCUG 14551 / JCM 1027 / KCTC 2358 / NCIMB 9240 / NCTC 8049).